The primary structure comprises 283 residues: 4-diphosphocytidyl-2-C-methyl-D-erythritol kinase (283 aa).

Lysine 10 is an active-site residue. Residue 99-109 coordinates ATP; the sequence is PMGGGLGGGSS. Aspartate 141 is an active-site residue.

It belongs to the GHMP kinase family. IspE subfamily. As to quaternary structure, homodimer.

The catalysed reaction is 4-CDP-2-C-methyl-D-erythritol + ATP = 4-CDP-2-C-methyl-D-erythritol 2-phosphate + ADP + H(+). It functions in the pathway isoprenoid biosynthesis; isopentenyl diphosphate biosynthesis via DXP pathway; isopentenyl diphosphate from 1-deoxy-D-xylulose 5-phosphate: step 3/6. Catalyzes the phosphorylation of the position 2 hydroxy group of 4-diphosphocytidyl-2C-methyl-D-erythritol. The protein is 4-diphosphocytidyl-2-C-methyl-D-erythritol kinase of Escherichia coli O127:H6 (strain E2348/69 / EPEC).